Here is a 277-residue protein sequence, read N- to C-terminus: Prohibitin-3, mitochondrial (277 aa).

An N-acetylglycine modification is found at glycine 2. Over 2 to 6 (GSQQA) the chain is Mitochondrial matrix. The chain crosses the membrane as a helical; Signal-anchor for type II membrane protein span at residues 7–28 (AVSFLSNLAKAAFGLGTAATVL). Over 29-277 (NTSLFTVDGG…GQSMLFALNR (249 aa)) the chain is Mitochondrial intermembrane.

Belongs to the prohibitin family. Component of a prohibitin multimeric complex in mitochondrial membranes. As to expression, mostly expressed in proliferative tissues, including vasculature, shoot and root apical tissues. Expressed in roots, stems, leaves and flowers (at protein level).

The protein resides in the cell membrane. Its subcellular location is the mitochondrion inner membrane. It localises to the nucleus. It is found in the cytoplasm. In terms of biological role, prohibitin probably acts as a holdase/unfoldase for the stabilization of newly synthesized mitochondrial proteins. Necessary for mitochondrial and cell metabolism and biogenesis. Required to regulate the ethylene-mediated signaling; involved in growth maintenance in the presence of ethylene. Functions in nitric oxide (NO)-mediated responses and in hydrogen peroxide-induced NO accumulation. This chain is Prohibitin-3, mitochondrial (PHB3), found in Arabidopsis thaliana (Mouse-ear cress).